A 680-amino-acid chain; its full sequence is DNA-directed RNA polymerase subunit beta' (680 aa).

Zn(2+) contacts are provided by Cys69, Cys71, Cys87, and Cys90. The Mg(2+) site is built by Asp489, Asp491, and Asp493.

It belongs to the RNA polymerase beta' chain family. RpoC1 subfamily. In plastids the minimal PEP RNA polymerase catalytic core is composed of four subunits: alpha, beta, beta', and beta''. When a (nuclear-encoded) sigma factor is associated with the core the holoenzyme is formed, which can initiate transcription. Mg(2+) is required as a cofactor. The cofactor is Zn(2+).

The protein resides in the plastid. The protein localises to the chloroplast. The catalysed reaction is RNA(n) + a ribonucleoside 5'-triphosphate = RNA(n+1) + diphosphate. In terms of biological role, DNA-dependent RNA polymerase catalyzes the transcription of DNA into RNA using the four ribonucleoside triphosphates as substrates. The sequence is that of DNA-directed RNA polymerase subunit beta' from Aethionema cordifolium (Lebanon stonecress).